The chain runs to 114 residues: DNA-directed RNA polymerase subunit omega (114 aa).

It belongs to the RNA polymerase subunit omega family. In terms of assembly, the RNAP catalytic core consists of 2 alpha, 1 beta, 1 beta' and 1 omega subunit. When a sigma factor is associated with the core the holoenzyme is formed, which can initiate transcription.

The enzyme catalyses RNA(n) + a ribonucleoside 5'-triphosphate = RNA(n+1) + diphosphate. Promotes RNA polymerase assembly. Latches the N- and C-terminal regions of the beta' subunit thereby facilitating its interaction with the beta and alpha subunits. The chain is DNA-directed RNA polymerase subunit omega from Erythrobacter litoralis (strain HTCC2594).